The chain runs to 262 residues: Phosphate import ATP-binding protein PstB (262 aa).

Residues 15-257 form the ABC transporter domain; it reads AKASNLNLWY…PQKSKTEQYI (243 aa). 47-54 is an ATP binding site; sequence GPSGCGKS.

It belongs to the ABC transporter superfamily. Phosphate importer (TC 3.A.1.7) family. In terms of assembly, the complex is composed of two ATP-binding proteins (PstB), two transmembrane proteins (PstC and PstA) and a solute-binding protein (PstS).

The protein localises to the cell inner membrane. It carries out the reaction phosphate(out) + ATP + H2O = ADP + 2 phosphate(in) + H(+). Its function is as follows. Part of the ABC transporter complex PstSACB involved in phosphate import. Responsible for energy coupling to the transport system. This Wolinella succinogenes (strain ATCC 29543 / DSM 1740 / CCUG 13145 / JCM 31913 / LMG 7466 / NCTC 11488 / FDC 602W) (Vibrio succinogenes) protein is Phosphate import ATP-binding protein PstB.